The following is a 76-amino-acid chain: Toxin Acra III-2 (76 aa).

Positions 3–67 (VPGNYPLNTY…IWDAVKNHCT (65 aa)) constitute an LCN-type CS-alpha/beta domain. Intrachain disulfides connect C18–C41, C27–C46, and C31–C48.

The protein belongs to the long (3 C-C) scorpion toxin superfamily. Sodium channel inhibitor family. Beta subfamily. Expressed by the venom gland.

The protein resides in the secreted. In terms of biological role, binds to sodium channels (Nav) and affects the channel activation process. The polypeptide is Toxin Acra III-2 (Androctonus crassicauda (Arabian fat-tailed scorpion)).